We begin with the raw amino-acid sequence, 258 residues long: Ureidoacrylate amidohydrolase RutB (258 aa).

Residues 1–23 (MDRPTTYPMDQPAGFRDAQGRHG) form a disordered region. Aspartate 47 (proton acceptor) is an active-site residue. Residue lysine 156 is part of the active site. The active-site Nucleophile is cysteine 189.

Belongs to the isochorismatase family. RutB subfamily.

The enzyme catalyses (Z)-3-ureidoacrylate + H2O + H(+) = (Z)-3-aminoacrylate + NH4(+) + CO2. It catalyses the reaction (Z)-3-ureidoacrylate + H2O = (Z)-3-aminoacrylate + carbamate + H(+). The catalysed reaction is (Z)-2-methylureidoacrylate + H2O + H(+) = (Z)-2-methylaminoacrylate + NH4(+) + CO2. Functionally, hydrolyzes ureidoacrylate to form aminoacrylate and carbamate. The carbamate hydrolyzes spontaneously, thereby releasing one of the nitrogen atoms of the pyrimidine ring as ammonia and one of its carbon atoms as CO2. The chain is Ureidoacrylate amidohydrolase RutB from Methylobacterium radiotolerans (strain ATCC 27329 / DSM 1819 / JCM 2831 / NBRC 15690 / NCIMB 10815 / 0-1).